The sequence spans 375 residues: Adiponectin receptor protein 1 (375 aa).

The segment at 1–60 (MSSHKGSVVAQGNGAPASNREADTVELAELGPLLEEKGKRVIANPPKAEEEQTCPVPQEE) is disordered. Topologically, residues 1–136 (MSSHKGSVVA…SIFRIHTETG (136 aa)) are cytoplasmic. A helical transmembrane segment spans residues 137–157 (NIWTHLLGFVLFLFLGILTML). Over 158–170 (RPNMYFMAPLQEK) the chain is Extracellular. A helical membrane pass occupies residues 171–191 (VVFGMFFLGAVLCLSFSWLFH). Position 191 (histidine 191) interacts with Zn(2+). The Cytoplasmic portion of the chain corresponds to 192-203 (TVYCHSEKVSRT). The chain crosses the membrane as a helical span at residues 204–224 (FSKLDYSGIALLIMGSFVPWL). Residues 225-234 (YYSFYCSPQP) lie on the Extracellular side of the membrane. A helical membrane pass occupies residues 235-255 (RLIYLSIVCVLGISAIIVAQW). Topologically, residues 256-264 (DRFATPKHR) are cytoplasmic. The chain crosses the membrane as a helical span at residues 265 to 285 (QTRAGVFLGLGLSGVVPTMHF). At 286 to 298 (TIAEGFVKATTVG) the chain is on the extracellular side. A helical transmembrane segment spans residues 299–319 (QMGWFFLMAVMYITGAGLYAA). At 320-337 (RIPERFFPGKFDIWFQSH) the chain is on the cytoplasmic side. Zn(2+) contacts are provided by histidine 337 and histidine 341. A helical membrane pass occupies residues 338–358 (QIFHVLVVAAAFVHFYGVSNL). Topologically, residues 359–375 (QEFRYGLEGGCTDDTLL) are extracellular.

The protein belongs to the ADIPOR family. As to quaternary structure, may form homooligomers and heterooligomers with ADIPOR2. Interacts with APPL2 (via BAR domain); hinders the accessibility of APPL1 to ADIPOR1; negatively regulates adiponectin signaling; ADIPOQ dissociates this interaction and facilitates the recruitment of APPL1 to ADIPOR1. Interacts with APPL1; ADIPOQ enhances this interaction; inhibites adiponectin-stimulated binding of APPL2 to ADIPOR1. Widely expressed. Highly expressed in heart and skeletal muscle. Expressed at intermediate level in brain, spleen, kidney, liver, placenta, lung and peripheral blood leukocytes. Weakly expressed in colon, thymus and small intestine.

It is found in the cell membrane. Its function is as follows. Receptor for ADIPOQ, an essential hormone secreted by adipocytes that regulates glucose and lipid metabolism. Required for normal glucose and fat homeostasis and for maintaining a normal body weight. ADIPOQ-binding activates a signaling cascade that leads to increased AMPK activity, and ultimately to increased fatty acid oxidation, increased glucose uptake and decreased gluconeogenesis. Has high affinity for globular adiponectin and low affinity for full-length adiponectin. In Homo sapiens (Human), this protein is Adiponectin receptor protein 1.